A 209-amino-acid polypeptide reads, in one-letter code: Small ribosomal subunit protein uS4 (209 aa).

In terms of domain architecture, S4 RNA-binding spans 98–158 (SRVDNIVYRL…EKSRSLAAIK (61 aa)).

The protein belongs to the universal ribosomal protein uS4 family. As to quaternary structure, part of the 30S ribosomal subunit. Contacts protein S5. The interaction surface between S4 and S5 is involved in control of translational fidelity.

One of the primary rRNA binding proteins, it binds directly to 16S rRNA where it nucleates assembly of the body of the 30S subunit. In terms of biological role, with S5 and S12 plays an important role in translational accuracy. The chain is Small ribosomal subunit protein uS4 from Pseudothermotoga lettingae (strain ATCC BAA-301 / DSM 14385 / NBRC 107922 / TMO) (Thermotoga lettingae).